The following is a 405-amino-acid chain: Pentatricopeptide repeat-containing protein At1g11630, mitochondrial (405 aa).

Residues 1–72 constitute a mitochondrion transit peptide; the sequence is MAFLFRIRTS…RSTSLSPDYH (72 aa). PPR repeat units lie at residues 74–108, 110–144, 145–180, 181–215, 216–250, 251–285, 286–320, 321–355, and 356–386; these read DRIIFSVAVVTLAREKHFVAVSQLLDGFIQNQPDP, SESFAVRAIILYGRANMLDRSIQTFRNLEQYEIPR, TVKSLNALLFACLMAKDYKEANRVYLEMPKMYGIEP, DLETYNRMIRVLCESGSTSSSYSIVAEMERKWIKP, TAASFGLMIDGFYKEEKFDEVRKVMRMMDEFGVHV, GVATYNIMIQCLCKRKKSAEAKALIDGVMSCRMRP, NSVTYSLLIHGFCSEENLDEAMNLFEVMVCNGYKP, DSECYFTLIHCLCKGGDFETALILCRESMEKNWVP, and SFSVMKWLVNGLASRSKVDEAKELIAVVKEK.

This sequence belongs to the PPR family. P subfamily.

Its subcellular location is the mitochondrion. This Arabidopsis thaliana (Mouse-ear cress) protein is Pentatricopeptide repeat-containing protein At1g11630, mitochondrial.